The following is a 182-amino-acid chain: MSEEVGAKRWYAVHTYSGYENKVKKNLEKRVESMNMTEQIFRVVIPEEEETQVKDGKAKKLTKKTFPGYVLVELVMTDESWYVVRNTPGVTGFVGSAGAGSKPNPLLPDEVRFILKQMGMKEKTIDVEVEVGEQVRIKSGPFANQVGEVQEIEADKFKLTVLVDMFGRETPVEVEFDQIEKL.

One can recognise a KOW domain in the interval 131–163 (VGEQVRIKSGPFANQVGEVQEIEADKFKLTVLV).

Belongs to the NusG family.

Its function is as follows. Participates in transcription elongation, termination and antitermination. The polypeptide is Transcription termination/antitermination protein NusG (Staphylococcus carnosus (strain TM300)).